We begin with the raw amino-acid sequence, 494 residues long: Alanine--glyoxylate aminotransferase 2-like (494 aa).

At Lys291 the chain carries N6-(pyridoxal phosphate)lysine.

The protein belongs to the class-III pyridoxal-phosphate-dependent aminotransferase family. Pyridoxal 5'-phosphate is required as a cofactor.

This Drosophila melanogaster (Fruit fly) protein is Alanine--glyoxylate aminotransferase 2-like.